The following is a 197-amino-acid chain: Isopentenyl-diphosphate Delta-isomerase (197 aa).

2 residues coordinate Mn(2+): His41 and His48. The Nudix hydrolase domain occupies 46 to 183 (QLHRAFSVFL…AWFMTVLDAA (138 aa)). Cys83 is a catalytic residue. Residue His85 participates in Mn(2+) binding. Mg(2+) is bound at residue Glu103. Mn(2+) contacts are provided by Glu130 and Glu132. The active site involves Glu132.

This sequence belongs to the IPP isomerase type 1 family. Requires Mg(2+) as cofactor. Mn(2+) is required as a cofactor.

The protein localises to the cytoplasm. The enzyme catalyses isopentenyl diphosphate = dimethylallyl diphosphate. Its pathway is isoprenoid biosynthesis; dimethylallyl diphosphate biosynthesis; dimethylallyl diphosphate from isopentenyl diphosphate: step 1/1. Catalyzes the 1,3-allylic rearrangement of the homoallylic substrate isopentenyl (IPP) to its highly electrophilic allylic isomer, dimethylallyl diphosphate (DMAPP). The polypeptide is Isopentenyl-diphosphate Delta-isomerase (Streptomyces griseus subsp. griseus (strain JCM 4626 / CBS 651.72 / NBRC 13350 / KCC S-0626 / ISP 5235)).